We begin with the raw amino-acid sequence, 351 residues long: Ca(2+)/H(+) antiporter ChaA (351 aa).

A run of 11 helical transmembrane segments spans residues 4-24 (IFFI…LMHW), 25-45 (PSAV…SYMG), 59-79 (IGGL…SLFA), 86-106 (GIVL…VAGL), 130-150 (GLLI…SVGM), 156-176 (LNLS…ALYF), 205-225 (VATI…ENLV), 241-261 (FIGV…SAII), 282-302 (IAMF…TSMP), 303-323 (LVFT…MIAI), and 331-351 (WFEG…FFLL).

This sequence belongs to the Ca(2+):cation antiporter (CaCA) (TC 2.A.19) family. Cation/proton exchanger (CAX) subfamily. Homotrimer.

It is found in the cell membrane. With respect to regulation, calcium efflux is tightly regulated by intracellular pH. Ca(+)/H(+) antiporter that extrudes calcium in exchange for external protons. Does not transport sodium or potassium. The sequence is that of Ca(2+)/H(+) antiporter ChaA (chaA) from Bacillus subtilis (strain 168).